Reading from the N-terminus, the 317-residue chain is Protein-L-isoaspartate O-methyltransferase (317 aa).

Residue S59 is part of the active site.

The protein belongs to the methyltransferase superfamily. L-isoaspartyl/D-aspartyl protein methyltransferase family. Monomer.

The protein localises to the cytoplasm. The catalysed reaction is [protein]-L-isoaspartate + S-adenosyl-L-methionine = [protein]-L-isoaspartate alpha-methyl ester + S-adenosyl-L-homocysteine. Catalyzes the methyl esterification of L-isoaspartyl residues in peptides and proteins that result from spontaneous decomposition of normal L-aspartyl and L-asparaginyl residues. It plays a role in the repair and/or degradation of damaged proteins. The chain is Protein-L-isoaspartate O-methyltransferase (pcm) from Thermotoga maritima (strain ATCC 43589 / DSM 3109 / JCM 10099 / NBRC 100826 / MSB8).